The following is an 81-amino-acid chain: Small ribosomal subunit protein bS18 (81 aa).

The protein belongs to the bacterial ribosomal protein bS18 family. As to quaternary structure, part of the 30S ribosomal subunit. Forms a tight heterodimer with protein bS6.

Binds as a heterodimer with protein bS6 to the central domain of the 16S rRNA, where it helps stabilize the platform of the 30S subunit. The chain is Small ribosomal subunit protein bS18 from Lactococcus lactis subsp. cremoris (strain MG1363).